The chain runs to 344 residues: Chorismatase (344 aa).

Substrate-binding residues include Tyr155, Arg162, Tyr215, and Arg228. Catalysis depends on Glu338, which acts as the Proton acceptor.

Belongs to the FkbO/Hyg5 family. As to quaternary structure, monomer.

It carries out the reaction chorismate + H2O = (3R,4R)-3,4-dihydroxy-3,4-dihydrobenzoate + pyruvate. Competitively inhibited by 3-(2-carboxyethyl)benzoate. In terms of biological role, involved in the biosynthesis of the macrocyclic amino acid-linked polyketides FK506 and FK520 which are potent immunosuppressants that prevent T-cell proliferation through initial binding to the immunophilin FKBP12. Catalyzes the hydrolysis of chorismate via a 1,4-conjugate elimination of water to yield (4R,5R)-4,5-dihydroxycyclohexa-1,5-dienecarboxylic acid (DCDC). The protein is Chorismatase (fkbO) of Streptomyces hygroscopicus.